Reading from the N-terminus, the 320-residue chain is Beta-carotene 4-ketolase 3 (320 aa).

It carries out the reaction echinenone + 2 AH2 + 2 O2 = canthaxanthin + 2 A + 3 H2O. The enzyme catalyses all-trans-beta-carotene + 2 AH2 + 2 O2 = echinenone + 2 A + 3 H2O. The protein operates within carotenoid biosynthesis. Involved in the biosynthesis of ketocarotenoids which are powerful anti-oxidative molecules. Catalyzes the conversion of beta-carotene to canthaxanthin via echinenone. In Haematococcus lacustris (Green alga), this protein is Beta-carotene 4-ketolase 3.